We begin with the raw amino-acid sequence, 600 residues long: Glutamine--fructose-6-phosphate aminotransferase [isomerizing] (600 aa).

The Nucleophile; for GATase activity role is filled by C2. One can recognise a Glutamine amidotransferase type-2 domain in the interval 2–217 (CGIVGFIGEQ…DKEIVIVTKE (216 aa)). 2 SIS domains span residues 283 to 422 (IRNA…AKGE) and 452 to 590 (LAKQ…VDKP). Catalysis depends on K595, which acts as the For Fru-6P isomerization activity.

As to quaternary structure, homodimer.

The protein localises to the cytoplasm. The catalysed reaction is D-fructose 6-phosphate + L-glutamine = D-glucosamine 6-phosphate + L-glutamate. In terms of biological role, catalyzes the first step in hexosamine metabolism, converting fructose-6P into glucosamine-6P using glutamine as a nitrogen source. In Bacillus cereus (strain ATCC 10987 / NRS 248), this protein is Glutamine--fructose-6-phosphate aminotransferase [isomerizing].